A 96-amino-acid chain; its full sequence is (4S)-4-hydroxy-5-phosphonooxypentane-2,3-dione isomerase (96 aa).

The ABM domain maps to 2 to 91 (HVTLVEINVH…MTGPRTKKVF (90 aa)).

It belongs to the LsrG family. As to quaternary structure, homodimer.

The protein resides in the cytoplasm. It catalyses the reaction (2S)-2-hydroxy-3,4-dioxopentyl phosphate = 3-hydroxy-2,4-dioxopentyl phosphate. Its function is as follows. Involved in the degradation of phospho-AI-2, thereby terminating induction of the lsr operon and closing the AI-2 signaling cycle. Catalyzes the conversion of (4S)-4-hydroxy-5-phosphonooxypentane-2,3-dione (P-DPD) to 3-hydroxy-5-phosphonooxypentane-2,4-dione (P-HPD). This chain is (4S)-4-hydroxy-5-phosphonooxypentane-2,3-dione isomerase, found in Salmonella typhimurium (strain LT2 / SGSC1412 / ATCC 700720).